The sequence spans 525 residues: GMP synthase [glutamine-hydrolyzing] (525 aa).

The region spanning 9–207 (RILILDFGSQ…VRDICQCEAL (199 aa)) is the Glutamine amidotransferase type-1 domain. Cys-86 (nucleophile) is an active-site residue. Residues His-181 and Glu-183 contribute to the active site. The 193-residue stretch at 208–400 (WTPAKIIDDA…LGLPYDMLYR (193 aa)) folds into the GMPS ATP-PPase domain. ATP is bound at residue 235–241 (SGGVDSS).

As to quaternary structure, homodimer.

The catalysed reaction is XMP + L-glutamine + ATP + H2O = GMP + L-glutamate + AMP + diphosphate + 2 H(+). The protein operates within purine metabolism; GMP biosynthesis; GMP from XMP (L-Gln route): step 1/1. Functionally, catalyzes the synthesis of GMP from XMP. The sequence is that of GMP synthase [glutamine-hydrolyzing] from Enterobacter sp. (strain 638).